The primary structure comprises 426 residues: Glutamyl-tRNA reductase (426 aa).

Residues 49 to 52, serine 107, 112 to 114, and glutamine 118 each bind substrate; these read TCNR and EPQ. Cysteine 50 (nucleophile) is an active-site residue. Position 187–192 (187–192) interacts with NADP(+); sequence GAGETI.

The protein belongs to the glutamyl-tRNA reductase family. In terms of assembly, homodimer.

It catalyses the reaction (S)-4-amino-5-oxopentanoate + tRNA(Glu) + NADP(+) = L-glutamyl-tRNA(Glu) + NADPH + H(+). Its pathway is porphyrin-containing compound metabolism; protoporphyrin-IX biosynthesis; 5-aminolevulinate from L-glutamyl-tRNA(Glu): step 1/2. Functionally, catalyzes the NADPH-dependent reduction of glutamyl-tRNA(Glu) to glutamate 1-semialdehyde (GSA). This Ectopseudomonas mendocina (strain ymp) (Pseudomonas mendocina) protein is Glutamyl-tRNA reductase.